A 281-amino-acid polypeptide reads, in one-letter code: Sulfur carrier protein FdhD (281 aa).

The active-site Cysteine persulfide intermediate is the Cys117.

It belongs to the FdhD family.

It localises to the cytoplasm. Its function is as follows. Required for formate dehydrogenase (FDH) activity. Acts as a sulfur carrier protein that transfers sulfur from IscS to the molybdenum cofactor prior to its insertion into FDH. The chain is Sulfur carrier protein FdhD from Xanthomonas euvesicatoria pv. vesicatoria (strain 85-10) (Xanthomonas campestris pv. vesicatoria).